Reading from the N-terminus, the 144-residue chain is Transcription antitermination protein NusB (144 aa).

This sequence belongs to the NusB family.

Functionally, involved in transcription antitermination. Required for transcription of ribosomal RNA (rRNA) genes. Binds specifically to the boxA antiterminator sequence of the ribosomal RNA (rrn) operons. The chain is Transcription antitermination protein NusB from Paraburkholderia xenovorans (strain LB400).